The chain runs to 56 residues: Ribosome modulation factor (56 aa).

This sequence belongs to the ribosome modulation factor family.

It is found in the cytoplasm. Its function is as follows. During stationary phase, converts 70S ribosomes to an inactive dimeric form (100S ribosomes). The protein is Ribosome modulation factor of Serratia proteamaculans (strain 568).